A 229-amino-acid polypeptide reads, in one-letter code: Aldehyde oxidoreductase iron-sulfur-binding subunit PaoA (229 aa).

Positions 1 to 21 are disordered; it reads MSNQGEYPEDNRVGKHEPHDL. The tat-type signal signal peptide spans 1–53; it reads MSNQGEYPEDNRVGKHEPHDLSLTRRDLIKVSAATAATAVVYPHSTLAASVPA. Over residues 9-21 the composition is skewed to basic and acidic residues; it reads EDNRVGKHEPHDL. The 2Fe-2S ferredoxin-type domain occupies 61–137; sequence MPLTLKVNGK…GAEITTIEGL (77 aa). [2Fe-2S] cluster-binding residues include Cys99, Cys104, Gly105, Cys107, Cys119, Cys158, Cys161, Cys208, and Cys210.

Heterotrimer composed of PaoA, PaoB and PaoC. It depends on [2Fe-2S] cluster as a cofactor. Post-translationally, exported by the Tat system. The position of the signal peptide cleavage has not been experimentally proven.

The protein resides in the periplasm. The catalysed reaction is an aldehyde + A + H2O = a carboxylate + AH2 + H(+). Its activity is regulated as follows. The complex requires PaoD for activity. Functionally, oxidizes aldehydes to the corresponding carboxylic acids with a preference for aromatic aldehydes. It might play a role in the detoxification of aldehydes to avoid cell damage. The protein is Aldehyde oxidoreductase iron-sulfur-binding subunit PaoA of Escherichia coli (strain K12).